A 119-amino-acid polypeptide reads, in one-letter code: Small ribosomal subunit protein bS16 (119 aa).

The span at 96-107 (RKKRRAYRQRRS) shows a compositional bias: basic residues. Residues 96–119 (RKKRRAYRQRRSTQREEAAKDATK) form a disordered region. Residues 108–119 (TQREEAAKDATK) show a composition bias toward basic and acidic residues.

The protein belongs to the bacterial ribosomal protein bS16 family.

This chain is Small ribosomal subunit protein bS16, found in Chlamydia pneumoniae (Chlamydophila pneumoniae).